Here is a 469-residue protein sequence, read N- to C-terminus: Collagenase 3 (469 aa).

A signal peptide spans 1–17; it reads SSLSVLVLSLSFAYCLS. The propeptide at 18–100 is activation peptide; sequence APVPQDEDSE…QPRCGVPDVG (83 aa). Residues 92-99 carry the Cysteine switch motif; that stretch reads PRCGVPDV. Position 94 (Cys-94) interacts with Zn(2+). The N-linked (GlcNAc...) asparagine glycan is linked to Asn-115. Asp-126 contacts Ca(2+). The N-linked (GlcNAc...) asparagine glycan is linked to Asn-150. Asp-160 contributes to the Ca(2+) binding site. Zn(2+) is bound by residues His-170 and Asp-172. Residues Asp-177, Gly-178, and Leu-182 each contribute to the Ca(2+) site. His-185 contributes to the Zn(2+) binding site. Ca(2+) contacts are provided by Gly-194 and Asp-196. Zn(2+) is bound at residue His-198. Ca(2+)-binding residues include Asp-200, Asp-201, and Glu-203. His-220 is a binding site for Zn(2+). Glu-221 is an active-site residue. His-224, His-230, and Met-238 together coordinate Zn(2+). Positions 266 to 469 are interaction with collagen; the sequence is PGNRDPHPKH…ILKTNFVLMC (204 aa). Hemopexin repeat units lie at residues 279 to 328, 329 to 375, 377 to 425, and 426 to 469; these read PEKC…WPEL, PNKL…GFPK, LKAI…FPGI, and GEKV…VLMC. The cysteines at positions 282 and 469 are disulfide-linked. Ca(2+) contacts are provided by Asp-289, Ile-291, Asp-333, Ala-335, Ala-383, and Asp-430.

Belongs to the peptidase M10A family. Requires Ca(2+) as cofactor. It depends on Zn(2+) as a cofactor. The proenzyme is activated by removal of the propeptide; this cleavage can be effected by other matrix metalloproteinases and may involve several cleavage steps. Cleavage can also be autocatalytic, after partial maturation by another protease or after treatment with 4-aminophenylmercuric acetate (APMA) (in vitro).

Its subcellular location is the secreted. The protein localises to the extracellular space. It is found in the extracellular matrix. Its function is as follows. Plays a role in the degradation of extracellular matrix proteins including fibrillar collagen, fibronectin, TNC and ACAN. Cleaves several types of triple helical collagen. May also function by activating or degrading key regulatory proteins. Plays a role in wound healing, tissue remodeling, cartilage degradation, bone development, bone mineralization and ossification. This is Collagenase 3 (mmp13) from Xenopus laevis (African clawed frog).